Reading from the N-terminus, the 297-residue chain is UTP--glucose-1-phosphate uridylyltransferase (297 aa).

Belongs to the UDPGP type 2 family.

The enzyme catalyses alpha-D-glucose 1-phosphate + UTP + H(+) = UDP-alpha-D-glucose + diphosphate. The protein operates within carbohydrate metabolism; nucleotide-sugar metabolism. It participates in bacterial outer membrane biogenesis; lipopolysaccharide biosynthesis. The polypeptide is UTP--glucose-1-phosphate uridylyltransferase (galF) (Escherichia coli O157:H7).